The chain runs to 530 residues: uncharacterized protein (530 aa).

The segment at 362 to 408 is disordered; that stretch reads NLTPKLNKTNEDIKSDSTSQPQGFPEGNRRVMENPETKVSKTDDEEM. The span at 388–403 shows a compositional bias: basic and acidic residues; sequence GNRRVMENPETKVSKT.

Belongs to the IIV-6 030L family.

This is an uncharacterized protein from Invertebrate iridescent virus 6 (IIV-6).